The primary structure comprises 355 residues: Diacylglycerol O-acyltransferase 2A (355 aa).

2 helical membrane passes run 41–61 (LLWC…CSIP) and 62–78 (VLLW…ILVW). N-linked (GlcNAc...) asparagine glycosylation occurs at N142.

It belongs to the diacylglycerol acyltransferase family.

The protein localises to the endoplasmic reticulum membrane. It catalyses the reaction an acyl-CoA + a 1,2-diacyl-sn-glycerol = a triacyl-sn-glycerol + CoA. The protein operates within glycerolipid metabolism; triacylglycerol biosynthesis. Catalyzes the terminal and only committed step in triacylglycerol synthesis by using diacylglycerol and fatty acyl CoA as substrates. Required for storage lipid synthesis. The protein is Diacylglycerol O-acyltransferase 2A (DGAT2A) of Umbelopsis ramanniana (Oleaginous fungus).